The following is a 323-amino-acid chain: HPr kinase/phosphorylase (323 aa).

Active-site residues include H142 and K163. An ATP-binding site is contributed by 157-164; sequence GESGVGKS. S164 is a binding site for Mg(2+). The Proton acceptor; for phosphorylation activity. Proton donor; for dephosphorylation activity role is filled by D181. The segment at 205 to 214 is important for the catalytic mechanism of both phosphorylation and dephosphorylation; sequence LEVRGLGMLN. E206 contributes to the Mg(2+) binding site. R249 is a catalytic residue. Positions 270 to 275 are important for the catalytic mechanism of dephosphorylation; that stretch reads PVAAGR.

This sequence belongs to the HPrK/P family. As to quaternary structure, homohexamer. Requires Mg(2+) as cofactor.

The catalysed reaction is [HPr protein]-L-serine + ATP = [HPr protein]-O-phospho-L-serine + ADP + H(+). It carries out the reaction [HPr protein]-O-phospho-L-serine + phosphate + H(+) = [HPr protein]-L-serine + diphosphate. In terms of biological role, catalyzes the ATP- as well as the pyrophosphate-dependent phosphorylation of a specific serine residue in HPr, a phosphocarrier protein of the phosphoenolpyruvate-dependent sugar phosphotransferase system (PTS). HprK/P also catalyzes the pyrophosphate-producing, inorganic phosphate-dependent dephosphorylation (phosphorolysis) of seryl-phosphorylated HPr (P-Ser-HPr). This Nitrosomonas europaea (strain ATCC 19718 / CIP 103999 / KCTC 2705 / NBRC 14298) protein is HPr kinase/phosphorylase.